An 89-amino-acid polypeptide reads, in one-letter code: Small ribosomal subunit protein bS16 (89 aa).

Belongs to the bacterial ribosomal protein bS16 family.

In Desulforamulus reducens (strain ATCC BAA-1160 / DSM 100696 / MI-1) (Desulfotomaculum reducens), this protein is Small ribosomal subunit protein bS16.